A 561-amino-acid polypeptide reads, in one-letter code: Dihydroxy-acid dehydratase (561 aa).

Cys50 is a [2Fe-2S] cluster binding site. A Mg(2+)-binding site is contributed by Asp82. Cys123 contacts [2Fe-2S] cluster. Mg(2+) contacts are provided by Asp124 and Lys125. At Lys125 the chain carries N6-carboxylysine. Cys195 serves as a coordination point for [2Fe-2S] cluster. Glu447 serves as a coordination point for Mg(2+). The Proton acceptor role is filled by Ser473.

The protein belongs to the IlvD/Edd family. As to quaternary structure, homodimer. [2Fe-2S] cluster serves as cofactor. The cofactor is Mg(2+).

The enzyme catalyses (2R)-2,3-dihydroxy-3-methylbutanoate = 3-methyl-2-oxobutanoate + H2O. It catalyses the reaction (2R,3R)-2,3-dihydroxy-3-methylpentanoate = (S)-3-methyl-2-oxopentanoate + H2O. Its pathway is amino-acid biosynthesis; L-isoleucine biosynthesis; L-isoleucine from 2-oxobutanoate: step 3/4. The protein operates within amino-acid biosynthesis; L-valine biosynthesis; L-valine from pyruvate: step 3/4. Functions in the biosynthesis of branched-chain amino acids. Catalyzes the dehydration of (2R,3R)-2,3-dihydroxy-3-methylpentanoate (2,3-dihydroxy-3-methylvalerate) into 2-oxo-3-methylpentanoate (2-oxo-3-methylvalerate) and of (2R)-2,3-dihydroxy-3-methylbutanoate (2,3-dihydroxyisovalerate) into 2-oxo-3-methylbutanoate (2-oxoisovalerate), the penultimate precursor to L-isoleucine and L-valine, respectively. In Trichodesmium erythraeum (strain IMS101), this protein is Dihydroxy-acid dehydratase.